A 374-amino-acid chain; its full sequence is Protein RecA (374 aa).

66 to 73 (GPESSGKT) lines the ATP pocket. The segment at 327-374 (LGVGVHPEESATEPGADAASAAPADAAPAVPAPTTAKATKSKAAAAKS) is disordered. The span at 338–374 (TEPGADAASAAPADAAPAVPAPTTAKATKSKAAAAKS) shows a compositional bias: low complexity.

The protein belongs to the RecA family.

The protein localises to the cytoplasm. Its function is as follows. Can catalyze the hydrolysis of ATP in the presence of single-stranded DNA, the ATP-dependent uptake of single-stranded DNA by duplex DNA, and the ATP-dependent hybridization of homologous single-stranded DNAs. It interacts with LexA causing its activation and leading to its autocatalytic cleavage. The polypeptide is Protein RecA (Streptomyces lividans).